We begin with the raw amino-acid sequence, 149 residues long: D-aminoacyl-tRNA deacylase (149 aa).

The short motif at 137–138 (GP) is the Gly-cisPro motif, important for rejection of L-amino acids element.

Belongs to the DTD family. In terms of assembly, homodimer.

The protein resides in the cytoplasm. It carries out the reaction glycyl-tRNA(Ala) + H2O = tRNA(Ala) + glycine + H(+). The catalysed reaction is a D-aminoacyl-tRNA + H2O = a tRNA + a D-alpha-amino acid + H(+). In terms of biological role, an aminoacyl-tRNA editing enzyme that deacylates mischarged D-aminoacyl-tRNAs. Also deacylates mischarged glycyl-tRNA(Ala), protecting cells against glycine mischarging by AlaRS. Acts via tRNA-based rather than protein-based catalysis; rejects L-amino acids rather than detecting D-amino acids in the active site. By recycling D-aminoacyl-tRNA to D-amino acids and free tRNA molecules, this enzyme counteracts the toxicity associated with the formation of D-aminoacyl-tRNA entities in vivo and helps enforce protein L-homochirality. The chain is D-aminoacyl-tRNA deacylase from Clostridioides difficile (strain 630) (Peptoclostridium difficile).